Here is a 37-residue protein sequence, read N- to C-terminus: Myo-inositol-binding protein (37 aa).

It belongs to the bacterial solute-binding protein 2 family.

It is found in the periplasm. This Pseudomonas sp protein is Myo-inositol-binding protein.